An 87-amino-acid chain; its full sequence is Alpha-toxin To2 (87 aa).

A signal peptide spans 1 to 20 (MIRFVLFISCFFLIGTVVEC). The 63-residue stretch at 22–84 (KDGYLMEGDG…IWDSKNNKCG (63 aa)) folds into the LCN-type CS-alpha/beta domain. 4 disulfide bridges follow: cysteine 32/cysteine 83, cysteine 36/cysteine 58, cysteine 44/cysteine 64, and cysteine 48/cysteine 66. The residue at position 85 (lysine 85) is a Lysine amide.

Expressed by the venom gland.

It localises to the secreted. Functionally, alpha toxins bind voltage-independently at site-3 of sodium channels (Nav) and inhibit the inactivation of the activated channels, thereby blocking neuronal transmission. Affects the tetrodotoxin-sensitive sodium current permeability of F-11 rat neuroblastoma cells. Produces a dose dependent increase in amplitude and duration of the current. This is Alpha-toxin To2 from Tityus obscurus (Amazonian scorpion).